We begin with the raw amino-acid sequence, 408 residues long: L,D-transpeptidase 2 (408 aa).

Positions 1 to 34 are cleaved as a signal peptide; it reads MPKVGIAAQAGRTRVRRAWLTALMMTAVMIGAVA. Cys35 carries the N-palmitoyl cysteine lipid modification. Cys35 carries S-diacylglycerol cysteine lipidation. Asp232, Glu235, and Gly236 together coordinate Ca(2+). A L,D-TPase catalytic domain is found at 253-378; sequence VIATADDNTK…VKRGDIVEVV (126 aa). Substrate is bound by residues Tyr318 and 331–332; that span reads SG. His336 serves as the catalytic Proton donor/acceptor. Cys354 acts as the Nucleophile in catalysis. A substrate-binding site is contributed by Asn356.

Monomer.

Its subcellular location is the cell membrane. It functions in the pathway cell wall biogenesis; peptidoglycan biosynthesis. With respect to regulation, is irreversibly inactivated by the beta-lactams carbapenems via the formation of a covalent adduct resulting from acylation of the catalytic Cys. Generates 3-&gt;3 cross-links in peptidoglycan, catalyzing the cleavage of the mDap(3)-D-Ala(4) bond of a tetrapeptide donor stem and the formation of a bond between the carbonyl of mDap(3) of the donor stem and the side chain of mDap(3) of the acceptor stem. Is specific for donor substrates containing a stem tetrapeptide since it cannot use pentapeptide stems. Is essential for virulence in a mouse model of acute infection. The protein is L,D-transpeptidase 2 (ldtB) of Mycobacterium tuberculosis (strain CDC 1551 / Oshkosh).